The chain runs to 262 residues: Apolipoprotein A-I (262 aa).

An N-terminal signal peptide occupies residues 1–18; the sequence is MKFLALALTILLAAATQA. Positions 32–63 are 3 X approximate tandem repeats; that stretch reads VKVAMMEYMAQVKETGQRSIDLLDDTEFKEYK. 2 repeat units span residues 64–85 and 87–107. The segment at 64-262 is 10 X approximate tandem repeats; that stretch reads VQLSQSLDNL…YETISQAMKA (199 aa). One copy of the 3; half-length repeat lies at 108 to 118; sequence KDVEDVRTQLE. Repeat copies occupy residues 119 to 140, 141 to 162, 163 to 184, 185 to 206, and 207 to 228. The stretch at 229 to 239 is one 9; half-length repeat; the sequence is PLTNDFKGQVG. The stretch at 240–262 is repeat 10; the sequence is PAAEQAKEKLMDFYETISQAMKA.

The protein belongs to the apolipoprotein A1/A4/E family.

Its subcellular location is the secreted. Functionally, participates in the reverse transport of cholesterol from tissues to the liver for excretion by promoting cholesterol efflux from tissues and by acting as a cofactor for the lecithin cholesterol acyltransferase (LCAT). The protein is Apolipoprotein A-I (apoa1) of Salmo trutta (Brown trout).